The following is a 530-amino-acid chain: Tryptophan 7-halogenase RebH (530 aa).

Residues Gly-13, Thr-15, Ala-16, Ala-39, Asp-41, Glu-49, and Ala-50 each coordinate FAD. Lys-79 is an active-site residue. Residues Val-197 and Thr-348 each coordinate FAD. Glu-357 is a binding site for L-tryptophan. Chloride is bound by residues Thr-359 and Gly-360. Residue Ile-361 coordinates FAD. Residues Tyr-454, Tyr-455, Glu-461, and Phe-465 each coordinate L-tryptophan.

Belongs to the flavin-dependent halogenase family. Bacterial tryptophan halogenase subfamily. As to quaternary structure, homodimer.

It catalyses the reaction L-tryptophan + FADH2 + chloride + O2 = 7-chloro-L-tryptophan + FAD + 2 H2O. Involved in the biosynthesis of the indolocarbazole antitumor agent rebeccamycin. Catalyzes the chlorination of tryptophan (Trp) at C7 position to yield 7-chlorotryptophan. It is also able to use bromide ions to generate monobrominated Trp. The polypeptide is Tryptophan 7-halogenase RebH (rebH) (Lentzea aerocolonigenes (Lechevalieria aerocolonigenes)).